The chain runs to 466 residues: 20-hydroxyecdysone protein (466 aa).

Residues methionine 1–alanine 16 form the signal peptide. The stretch at glutamate 48 to lysine 50 is one 1; approximate repeat. A 16 X repeats region spans residues glutamate 48–lysine 157. A 2; approximate repeat occupies glutamate 53 to lysine 55. Positions lysine 55–glutamate 94 are disordered. The stretch at glutamate 58–lysine 60 is one 3; approximate repeat. Residues aspartate 70–lysine 72 form a 4; approximate repeat. A 5; approximate repeat occupies glutamate 74–lysine 76. The stretch at glutamate 78 to lysine 80 is one 6; approximate repeat. A 7; approximate repeat occupies glutamate 82–lysine 84. The 8; approximate repeat unit spans residues aspartate 90–lysine 92. The 9; approximate repeat unit spans residues glutamate 94–lysine 96. A 10; approximate repeat occupies aspartate 98 to lysine 100. One copy of the 11; approximate repeat lies at aspartate 102–lysine 104. A 12; approximate repeat occupies glutamate 106–lysine 108. The disordered stretch occupies residues proline 119–valine 220. The segment covering leucine 124–proline 160 has biased composition (basic and acidic residues). Residues glutamate 125–lysine 127 form a 13; approximate repeat. Residues glutamate 139–lysine 141 form a 14; approximate repeat. Residues glutamate 148–lysine 150 form a 15; approximate repeat. Residues glutamate 155–lysine 157 form a 16; approximate repeat. A compositionally biased stretch (low complexity) spans alanine 170–glutamate 180. Residues proline 185 to glutamine 194 are compositionally biased toward polar residues. Low complexity predominate over residues glutamine 203–glutamine 216. N-linked (GlcNAc...) asparagine glycosylation is found at asparagine 294 and asparagine 352. Residues arginine 378–valine 435 form a disordered region. Residues proline 379–lysine 394 show a composition bias toward low complexity. A compositionally biased stretch (acidic residues) spans alanine 404–aspartate 416.

The protein resides in the secreted. Its function is as follows. Probably has an essential role in embryogenesis, induces morphogenesis of imaginal disks, and may participate in multimolecular aggregates. This is 20-hydroxyecdysone protein (ImpE2) from Drosophila melanogaster (Fruit fly).